Here is a 460-residue protein sequence, read N- to C-terminus: ATP synthase subunit beta (460 aa).

G150 to T157 serves as a coordination point for ATP.

The protein belongs to the ATPase alpha/beta chains family. In terms of assembly, F-type ATPases have 2 components, CF(1) - the catalytic core - and CF(0) - the membrane proton channel. CF(1) has five subunits: alpha(3), beta(3), gamma(1), delta(1), epsilon(1). CF(0) has three main subunits: a(1), b(2) and c(9-12). The alpha and beta chains form an alternating ring which encloses part of the gamma chain. CF(1) is attached to CF(0) by a central stalk formed by the gamma and epsilon chains, while a peripheral stalk is formed by the delta and b chains.

It localises to the cell inner membrane. The catalysed reaction is ATP + H2O + 4 H(+)(in) = ADP + phosphate + 5 H(+)(out). Produces ATP from ADP in the presence of a proton gradient across the membrane. The catalytic sites are hosted primarily by the beta subunits. In Klebsiella pneumoniae subsp. pneumoniae (strain ATCC 700721 / MGH 78578), this protein is ATP synthase subunit beta.